A 139-amino-acid polypeptide reads, in one-letter code: FAD synthase (139 aa).

Residues 9–10, 14–17, and Asp-92 each bind ATP; these read TF and HPGH.

Belongs to the archaeal FAD synthase family. As to quaternary structure, homodimer. The cofactor is a divalent metal cation.

The catalysed reaction is FMN + ATP + H(+) = FAD + diphosphate. It functions in the pathway cofactor biosynthesis; FAD biosynthesis; FAD from FMN: step 1/1. Its function is as follows. Catalyzes the transfer of the AMP portion of ATP to flavin mononucleotide (FMN) to produce flavin adenine dinucleotide (FAD) coenzyme. The sequence is that of FAD synthase from Methanosarcina barkeri (strain Fusaro / DSM 804).